A 134-amino-acid chain; its full sequence is Global transcriptional regulator Spx (134 aa).

A disulfide bridge connects residues Cys-10 and Cys-13.

It belongs to the ArsC family. Spx subfamily. Interacts with the C-terminal domain of the alpha subunit of the RNAP.

The protein localises to the cytoplasm. Global transcriptional regulator that plays a key role in stress response and exerts either positive or negative regulation of genes. Acts by interacting with the C-terminal domain of the alpha subunit of the RNA polymerase (RNAP). This interaction can enhance binding of RNAP to the promoter region of target genes and stimulate their transcription, or block interaction of RNAP with activator. This chain is Global transcriptional regulator Spx, found in Streptococcus pyogenes serotype M3 (strain ATCC BAA-595 / MGAS315).